A 48-amino-acid polypeptide reads, in one-letter code: Phospholipase A2 superbin d (48 aa).

Tyr28, Gly30, and Gly32 together coordinate Ca(2+). Cys29 and Cys45 are oxidised to a cystine. Residue His48 is part of the active site.

It depends on Ca(2+) as a cofactor. Expressed by the venom gland.

Its subcellular location is the secreted. The catalysed reaction is a 1,2-diacyl-sn-glycero-3-phosphocholine + H2O = a 1-acyl-sn-glycero-3-phosphocholine + a fatty acid + H(+). Functionally, snake venom phospholipase A2 (PLA2) that inhibits collagen-induced platelet aggregation. In terms of inhibition of platelet aggregation, superbin d is less potent as superbin a, b, and c. PLA2 catalyzes the calcium-dependent hydrolysis of the 2-acyl groups in 3-sn-phosphoglycerides. This Austrelaps superbus (Lowland copperhead snake) protein is Phospholipase A2 superbin d.